The sequence spans 79 residues: Exodeoxyribonuclease 7 small subunit (79 aa).

Belongs to the XseB family. Heterooligomer composed of large and small subunits.

The protein localises to the cytoplasm. It catalyses the reaction Exonucleolytic cleavage in either 5'- to 3'- or 3'- to 5'-direction to yield nucleoside 5'-phosphates.. Its function is as follows. Bidirectionally degrades single-stranded DNA into large acid-insoluble oligonucleotides, which are then degraded further into small acid-soluble oligonucleotides. In Lactococcus lactis subsp. cremoris (strain SK11), this protein is Exodeoxyribonuclease 7 small subunit.